The sequence spans 95 residues: Large ribosomal subunit protein bL25 (95 aa).

It belongs to the bacterial ribosomal protein bL25 family. In terms of assembly, part of the 50S ribosomal subunit; part of the 5S rRNA/L5/L18/L25 subcomplex. Contacts the 5S rRNA. Binds to the 5S rRNA independently of L5 and L18.

Functionally, this is one of the proteins that binds to the 5S RNA in the ribosome where it forms part of the central protuberance. This is Large ribosomal subunit protein bL25 from Tolumonas auensis (strain DSM 9187 / NBRC 110442 / TA 4).